Reading from the N-terminus, the 161-residue chain is Thy-1 membrane glycoprotein (161 aa).

Positions methionine 1–glycine 19 are cleaved as a signal peptide. Glutamine 20 bears the Pyrrolidone carboxylic acid mark. The region spanning glutamine 20–lysine 126 is the Ig-like V-type domain. Disulfide bonds link cysteine 28-cysteine 130 and cysteine 38-cysteine 104. N-linked (GlcNAc...) asparagine glycosylation is found at asparagine 42 and asparagine 79. Phosphoserine is present on serine 82. The N-linked (GlcNAc...) asparagine glycan is linked to asparagine 119. The GPI-anchor amidated cysteine; alternate moiety is linked to residue cysteine 130. Residues glutamate 131–leucine 161 constitute a propeptide, removed in mature form. A glycan (N-linked (GlcNAc...) asparagine) is linked at asparagine 139.

Its subcellular location is the cell membrane. May play a role in cell-cell or cell-ligand interactions during synaptogenesis and other events in the brain. This chain is Thy-1 membrane glycoprotein (THY1), found in Macaca mulatta (Rhesus macaque).